We begin with the raw amino-acid sequence, 473 residues long: FAD-dependent urate hydroxylase (473 aa).

The protein belongs to the HpyO family. In terms of assembly, homodimer. It depends on FAD as a cofactor.

It carries out the reaction urate + NADH + O2 + H(+) = 5-hydroxyisourate + NAD(+) + H2O. It catalyses the reaction urate + NADPH + O2 + H(+) = 5-hydroxyisourate + NADP(+) + H2O. Its pathway is purine metabolism; urate degradation. Its function is as follows. Catalyzes the hydroxylation of urate to 5-hydroxyisourate (HIU). Is likely to be involved in the urate degradation pathway to allantoin. Is slightly more efficient (about 2.6 times) with NADPH than NADH as the electron donor. The sequence is that of FAD-dependent urate hydroxylase from Xanthomonas campestris pv. campestris (strain ATCC 33913 / DSM 3586 / NCPPB 528 / LMG 568 / P 25).